A 303-amino-acid polypeptide reads, in one-letter code: Probable 5-dehydro-4-deoxyglucarate dehydratase (303 aa).

It belongs to the DapA family.

It catalyses the reaction 5-dehydro-4-deoxy-D-glucarate + H(+) = 2,5-dioxopentanoate + CO2 + H2O. It participates in carbohydrate acid metabolism; D-glucarate degradation; 2,5-dioxopentanoate from D-glucarate: step 2/2. The sequence is that of Probable 5-dehydro-4-deoxyglucarate dehydratase from Delftia acidovorans (strain DSM 14801 / SPH-1).